Here is a 730-residue protein sequence, read N- to C-terminus: Synaptotagmin-like protein 5 (730 aa).

In terms of domain architecture, RabBD spans 7–123 (FINLSFLLDH…IITGEWFFEE (117 aa)). The segment at 64–106 (CVHCHRNLGLIFDRGDPCQACSLRVCRECRVAGPNGSWKCTVC) adopts an FYVE-type zinc-finger fold. A Phosphoserine modification is found at serine 147. 3 disordered regions span residues 147-188 (SPGA…GFLL), 217-271 (QHFR…TRTV), and 294-355 (SQEL…LDKD). Composition is skewed to polar residues over residues 248–271 (PKSS…TRTV) and 305–322 (TSGT…SSDQ). C2 domains follow at residues 406 to 527 (VSGE…DEWF) and 563 to 694 (PPEQ…VDWM).

Binds RAB27A that has been activated by GTP-binding, and possibly also RAB3A and RAB6A. As to expression, highly expressed in placenta and liver.

The protein localises to the membrane. May act as Rab effector protein and play a role in vesicle trafficking. Binds phospholipids. The protein is Synaptotagmin-like protein 5 (SYTL5) of Homo sapiens (Human).